The following is an 83-amino-acid chain: Cytochrome b559 subunit alpha (83 aa).

The helical transmembrane segment at 21–35 threads the bilayer; sequence VIHSITVPSLFIAGW. His23 contributes to the heme binding site.

The protein belongs to the PsbE/PsbF family. Heterodimer of an alpha subunit and a beta subunit. PSII is composed of 1 copy each of membrane proteins PsbA, PsbB, PsbC, PsbD, PsbE, PsbF, PsbH, PsbI, PsbJ, PsbK, PsbL, PsbM, PsbT, PsbX, PsbY, PsbZ, Psb30/Ycf12, at least 3 peripheral proteins of the oxygen-evolving complex and a large number of cofactors. It forms dimeric complexes. Heme b is required as a cofactor.

It localises to the plastid. Its subcellular location is the chloroplast thylakoid membrane. This b-type cytochrome is tightly associated with the reaction center of photosystem II (PSII). PSII is a light-driven water:plastoquinone oxidoreductase that uses light energy to abstract electrons from H(2)O, generating O(2) and a proton gradient subsequently used for ATP formation. It consists of a core antenna complex that captures photons, and an electron transfer chain that converts photonic excitation into a charge separation. This is Cytochrome b559 subunit alpha from Oltmannsiellopsis viridis (Marine flagellate).